The following is a 459-amino-acid chain: 3-carboxy-cis,cis-muconate cycloisomerase (459 aa).

Belongs to the class-II fumarase/aspartase family. As to quaternary structure, homotetramer.

Its subcellular location is the cytoplasm. It carries out the reaction 2-(carboxymethyl)-5-oxo-2,5-dihydro-2-furoate = 3-carboxy-cis,cis-muconate + H(+). It functions in the pathway aromatic compound metabolism; beta-ketoadipate pathway; 5-oxo-4,5-dihydro-2-furylacetate from 3-carboxy-cis,cis-muconate: step 1/2. Catalyzes an anti cycloisomerization. The protein is 3-carboxy-cis,cis-muconate cycloisomerase (pcaB) of Pseudomonas aeruginosa (strain ATCC 15692 / DSM 22644 / CIP 104116 / JCM 14847 / LMG 12228 / 1C / PRS 101 / PAO1).